The following is a 77-amino-acid chain: Immune protein Tis1 (77 aa).

In terms of biological role, immunity protein that plays a role in preventing early activation of toxin Tas1. The chain is Immune protein Tis1 (tis1) from Pseudomonas aeruginosa (strain UCBPP-PA14).